A 35-amino-acid polypeptide reads, in one-letter code: MEVNILAFIATALFILVPTAFLLIIYVKTVSQSVE.

A helical membrane pass occupies residues 5-25 (ILAFIATALFILVPTAFLLII).

It belongs to the PsbM family. PSII is composed of 1 copy each of membrane proteins PsbA, PsbB, PsbC, PsbD, PsbE, PsbF, PsbH, PsbI, PsbJ, PsbK, PsbL, PsbM, PsbT, PsbX, PsbY, PsbZ, Psb30/Ycf12, at least 3 peripheral proteins of the oxygen-evolving complex and a large number of cofactors. It forms dimeric complexes.

The protein localises to the plastid. It is found in the chloroplast thylakoid membrane. In terms of biological role, one of the components of the core complex of photosystem II (PSII). PSII is a light-driven water:plastoquinone oxidoreductase that uses light energy to abstract electrons from H(2)O, generating O(2) and a proton gradient subsequently used for ATP formation. It consists of a core antenna complex that captures photons, and an electron transfer chain that converts photonic excitation into a charge separation. This subunit is found at the monomer-monomer interface. The chain is Photosystem II reaction center protein M from Amborella trichopoda.